Here is a 369-residue protein sequence, read N- to C-terminus: Transcription initiation factor IIA large subunit (369 aa).

Composition is skewed to polar residues over residues 113–210 and 218–233; these read HGNS…QNSP and TESSNTTPANSRNDVP. Residues 113 to 248 are disordered; that stretch reads HGNSNYYSPP…IHDLDDAGSP (136 aa). Serine 249 is subject to Phosphoserine. The tract at residues 282 to 319 is disordered; sequence IEDNEDEKKPPVDTPSDEAINSDLDDPDSDEAPETEEG. Residues 304–319 are compositionally biased toward acidic residues; the sequence is DLDDPDSDEAPETEEG.

The protein belongs to the TFIIA subunit 1 family. TFIIA is a heterodimer of the large subunit and the small subunit gamma.

It is found in the nucleus. TFIIA is a component of the transcription machinery of RNA polymerase II and plays an important role in transcriptional activation. TFIIA in a complex with tbp mediates transcriptional activity. The protein is Transcription initiation factor IIA large subunit of Schizosaccharomyces pombe (strain 972 / ATCC 24843) (Fission yeast).